A 70-amino-acid chain; its full sequence is MFTLKKSMLLLFFLGTINLSLCEQERNADEEERRDDDEMDVEVEKRFLPMLAGLAANFLPKLFCKITKKC.

The N-terminal stretch at 1 to 22 (MFTLKKSMLLLFFLGTINLSLC) is a signal peptide. The propeptide occupies 23-44 (EQERNADEEERRDDDEMDVEVE). Residues Cys64 and Cys70 are joined by a disulfide bond.

This sequence belongs to the frog skin active peptide (FSAP) family. Brevinin subfamily. Expressed by the skin glands.

It localises to the secreted. In terms of biological role, antimicrobial peptide with activity against a variety of Gram-negative and Gram-positive bacteria and against fungi. Shows strong hemolytic activity against human erythrocytes. This Amolops mantzorum (Sichuan torrent frog) protein is Brevinin-1MT2.